We begin with the raw amino-acid sequence, 160 residues long: Protein cornichon homolog 2 (160 aa).

Topologically, residues methionine 1–tyrosine 10 are cytoplasmic. Residues methionine 11–phenylalanine 31 traverse the membrane as a helical segment. Over aspartate 32–tyrosine 72 the chain is Lumenal. The helical transmembrane segment at cysteine 73–leucine 93 threads the bilayer. Residues asparagine 94 to lysine 138 are Cytoplasmic-facing. Residues leucine 139 to serine 159 traverse the membrane as a helical segment. Phenylalanine 160 is a topological domain (lumenal).

It belongs to the cornichon family. As to quaternary structure, interacts with HBEGF. In terms of tissue distribution, expressed in the odd-numbered neuromeres (r3 and r5) of the developing hindbrain.

It localises to the membrane. Regulates the trafficking and gating properties of AMPA-selective glutamate receptors (AMPARs). Plays an important role in the proper development of cranial nerves by facilitating the secretion of HBEGF. The chain is Protein cornichon homolog 2 (CNIH2) from Gallus gallus (Chicken).